The primary structure comprises 713 residues: Zinc finger and BTB domain-containing protein 1 (713 aa).

Residue Lys3 forms a Glycyl lysine isopeptide (Lys-Gly) (interchain with G-Cter in SUMO2) linkage. The region spanning 24-91 (CDCCIAIDDI…MYLGKIMTAP (68 aa)) is the BTB domain. Glycyl lysine isopeptide (Lys-Gly) (interchain with G-Cter in SUMO2) cross-links involve residues Lys200 and Lys205. The segment at 216–242 (FTCDSCGFGFSCEKLLDEHVLTCTNRH) adopts a C2H2-type 1; atypical zinc-finger fold. Glycyl lysine isopeptide (Lys-Gly) (interchain with G-Cter in SUMO2) cross-links involve residues Lys261, Lys266, Lys276, Lys284, Lys304, Lys316, Lys328, Lys340, and Lys346. A disordered region spans residues 270–319 (AEKDSSKTFSAQPDKYREDANQAPDDSASTTGSRKSTVEAGIAGEEKSRA). Position 355 is a phosphoserine (Ser355). Thr356 carries the phosphothreonine modification. Lys381 participates in a covalent cross-link: Glycyl lysine isopeptide (Lys-Gly) (interchain with G-Cter in SUMO2). The C2H2-type 2; atypical zinc-finger motif lies at 448–470 (CACGKCGQILVKGRQLQEHAQRC). Lys528 is covalently cross-linked (Glycyl lysine isopeptide (Lys-Gly) (interchain with G-Cter in SUMO2)). The UBZ-type zinc finger occupies 533-558 (PFRCPNCGQRFETENLVVEHMSSCLD). Residue Lys563 forms a Glycyl lysine isopeptide (Lys-Gly) (interchain with G-Cter in SUMO2) linkage. 5 C2H2-type zinc fingers span residues 578–600 (HFCN…YTVH), 606–628 (FVCQ…NDMH), 634–656 (YVCS…MISH), 662–684 (TICQ…MDVH), and 686–709 (YTCG…NAKH).

Homodimer. Homodimer. Interacts (via BTB domain) with TRIM28 (unphosphorylated or phosphorylated form). Sumoylated with SUMO2 at Lys-328 and to a lesser extent at Lys-266. Sumoylation inhibits its transcriptional repression activity and regulates its subcellular localization. As to expression, expressed strongly in thymus and spleen, less in lymph nodes and peripheral blood mononuclear cells (PBMCs) and weakly in bone marrow. Strongly expressed in immature, but weakly in mature bone marrow-lymphocyte B.

The protein localises to the nucleus. It is found in the nucleoplasm. Its function is as follows. Acts as a transcriptional repressor. Represses cAMP-responsive element (CRE)-mediated transcriptional activation. In addition, has a role in translesion DNA synthesis. Requires for UV-inducible RAD18 loading, PCNA monoubiquitination, POLH recruitment to replication factories and efficient translesion DNA synthesis. Plays a key role in the transcriptional regulation of T lymphocyte development. This is Zinc finger and BTB domain-containing protein 1 (Zbtb1) from Mus musculus (Mouse).